The following is a 356-amino-acid chain: Histidinol-phosphate aminotransferase (356 aa).

An N6-(pyridoxal phosphate)lysine modification is found at Lys-214.

It belongs to the class-II pyridoxal-phosphate-dependent aminotransferase family. Histidinol-phosphate aminotransferase subfamily. In terms of assembly, homodimer. It depends on pyridoxal 5'-phosphate as a cofactor.

It catalyses the reaction L-histidinol phosphate + 2-oxoglutarate = 3-(imidazol-4-yl)-2-oxopropyl phosphate + L-glutamate. Its pathway is amino-acid biosynthesis; L-histidine biosynthesis; L-histidine from 5-phospho-alpha-D-ribose 1-diphosphate: step 7/9. The sequence is that of Histidinol-phosphate aminotransferase (hisC) from Escherichia coli O157:H7.